A 139-amino-acid chain; its full sequence is Heat shock protein homolog C338.06c (139 aa).

Residues 27–139 (AWLSCWGPAL…EFTTRIVEIQ (113 aa)) enclose the sHSP domain.

This sequence belongs to the small heat shock protein (HSP20) family.

Its subcellular location is the mitochondrion. The polypeptide is Heat shock protein homolog C338.06c (Schizosaccharomyces pombe (strain 972 / ATCC 24843) (Fission yeast)).